The primary structure comprises 238 residues: uncharacterized protein (238 aa).

Residues 1 to 28 (MSRNSRGSGRYVFVVLACVFGYTRAVHA) form the signal peptide.

This is an uncharacterized protein from Treponema pallidum (strain Nichols).